The chain runs to 442 residues: Putative major teichoic acid biosynthesis protein C (442 aa).

Unknown. Might be involved in poly(glycerol phosphate) teichoic acid biosynthesis. In Bacillus subtilis (strain 168), this protein is Putative major teichoic acid biosynthesis protein C (tagC).